An 81-amino-acid chain; its full sequence is Probable antimicrobial peptide Con13 (81 aa).

The N-terminal stretch at M1 to A22 is a signal peptide. A propeptide spanning residues E66–S81 is cleaved from the precursor.

The protein belongs to the non-disulfide-bridged peptide (NDBP) superfamily. Long chain multifunctional peptide (group 2) family. In terms of tissue distribution, expressed by the venom gland.

Its subcellular location is the secreted. The protein resides in the target cell membrane. Functionally, at high concentrations, acts as a pore former in cellular membranes and causes the leakage of the cells. At submicromolar concentrations, degranulates granulocytes and has a weak hemolytic activity against human erythrocytes. Also strongly inhibits the production of superoxide anions. Has a strong antibacterial activity against Gram-negative bacteria but is less active against Gram-positive bacteria. Also has antifungal activity. In Opisthacanthus cayaporum (South American scorpion), this protein is Probable antimicrobial peptide Con13.